A 407-amino-acid chain; its full sequence is Phosphopentomutase (407 aa).

Positions 10, 306, 311, 347, 348, and 359 each coordinate Mn(2+).

The protein belongs to the phosphopentomutase family. Mn(2+) is required as a cofactor.

The protein localises to the cytoplasm. The catalysed reaction is 2-deoxy-alpha-D-ribose 1-phosphate = 2-deoxy-D-ribose 5-phosphate. It carries out the reaction alpha-D-ribose 1-phosphate = D-ribose 5-phosphate. It participates in carbohydrate degradation; 2-deoxy-D-ribose 1-phosphate degradation; D-glyceraldehyde 3-phosphate and acetaldehyde from 2-deoxy-alpha-D-ribose 1-phosphate: step 1/2. Functionally, isomerase that catalyzes the conversion of deoxy-ribose 1-phosphate (dRib-1-P) and ribose 1-phosphate (Rib-1-P) to deoxy-ribose 5-phosphate (dRib-5-P) and ribose 5-phosphate (Rib-5-P), respectively. This is Phosphopentomutase from Salmonella arizonae (strain ATCC BAA-731 / CDC346-86 / RSK2980).